A 300-amino-acid polypeptide reads, in one-letter code: Ornithine carbamoyltransferase (300 aa).

Residues S49–T52, Q76, R100, and H127–Q130 contribute to the carbamoyl phosphate site. Residues N158, D218, and S222–M223 contribute to the L-ornithine site. Residues C258–L259 and R286 each bind carbamoyl phosphate.

Belongs to the aspartate/ornithine carbamoyltransferase superfamily. OTCase family.

It localises to the cytoplasm. It carries out the reaction carbamoyl phosphate + L-ornithine = L-citrulline + phosphate + H(+). It functions in the pathway amino-acid biosynthesis; L-arginine biosynthesis; L-arginine from L-ornithine and carbamoyl phosphate: step 1/3. In terms of biological role, reversibly catalyzes the transfer of the carbamoyl group from carbamoyl phosphate (CP) to the N(epsilon) atom of ornithine (ORN) to produce L-citrulline. The polypeptide is Ornithine carbamoyltransferase (Oleidesulfovibrio alaskensis (strain ATCC BAA-1058 / DSM 17464 / G20) (Desulfovibrio alaskensis)).